A 487-amino-acid polypeptide reads, in one-letter code: Aspyridones efflux protein apdF (487 aa).

The span at 1–21 (MSSVRESSKDESIVHPPKAPE) shows a compositional bias: basic and acidic residues. The interval 1-25 (MSSVRESSKDESIVHPPKAPESEPF) is disordered. A helical transmembrane segment spans residues 35 to 55 (VALGAGGVLFCTFGYVNAFGV). N-linked (GlcNAc...) asparagine glycosylation is present at Asn-67. A run of 8 helical transmembrane segments spans residues 75–95 (WIGSVQTFFLFGSGLVGGPLF), 99–119 (GAKVIWAPAVLVIFSVMMTSL), 126–146 (FFLAQGILGGMSMGLSLAPAL), 159–179 (AAMGITIAGSSLGGVIFPIAL), 191–211 (WAVRIVGFIILGVMSFAVLGI), 234–254 (VATLTAVFFLNVGIFTPFFYL), 262–282 (GMSTGLAFYLIAIQNASSFFG), and 293–313 (IGPYNMLSTVSIITAIITFCW). A glycan (N-linked (GlcNAc...) asparagine) is linked at Asn-319. 3 consecutive transmembrane segments (helical) span residues 322 to 342 (IIVFSVLYGFFSGGIIGITPA), 354 to 374 (IGTYIGMGMAVMSVATLIGPP), and 385 to 405 (GFLQVQIFSAAVMMFGGVLAF).

Belongs to the major facilitator superfamily. Monocarboxylate porter (TC 2.A.1.13) family.

The protein resides in the cell membrane. Its function is as follows. Efflux pump that may be involved in the secretion of aspyridones. The protein is Aspyridones efflux protein apdF of Emericella nidulans (strain FGSC A4 / ATCC 38163 / CBS 112.46 / NRRL 194 / M139) (Aspergillus nidulans).